Consider the following 449-residue polypeptide: Chromosomal replication initiator protein DnaA (449 aa).

The segment at 1 to 69 (MEKVWLEAQS…VEAISSLTSV (69 aa)) is domain I, interacts with DnaA modulators. The tract at residues 69–112 (VKYQIEFKITEKIPLESKPVDNFTPVIKDNEPSKETNKNIDITA) is domain II. The interval 113-329 (NLNPKYTFDS…GMLIRLGAYA (217 aa)) is domain III, AAA+ region. Gly-157, Gly-159, Lys-160, and Thr-161 together coordinate ATP. The tract at residues 330-449 (SLTGSEITLN…VENLKKELIT (120 aa)) is domain IV, binds dsDNA.

The protein belongs to the DnaA family. As to quaternary structure, oligomerizes as a right-handed, spiral filament on DNA at oriC.

The protein localises to the cytoplasm. Plays an essential role in the initiation and regulation of chromosomal replication. ATP-DnaA binds to the origin of replication (oriC) to initiate formation of the DNA replication initiation complex once per cell cycle. Binds the DnaA box (a 9 base pair repeat at the origin) and separates the double-stranded (ds)DNA. Forms a right-handed helical filament on oriC DNA; dsDNA binds to the exterior of the filament while single-stranded (ss)DNA is stabiized in the filament's interior. The ATP-DnaA-oriC complex binds and stabilizes one strand of the AT-rich DNA unwinding element (DUE), permitting loading of DNA polymerase. After initiation quickly degrades to an ADP-DnaA complex that is not apt for DNA replication. Binds acidic phospholipids. In Geotalea uraniireducens (strain Rf4) (Geobacter uraniireducens), this protein is Chromosomal replication initiator protein DnaA.